The following is a 156-amino-acid chain: Eosinophil cationic protein 2 (156 aa).

The first 25 residues, 1 to 25, serve as a signal peptide directing secretion; it reads MGPKLLESRLCLLLLLGLVLMLASC. The active-site Proton acceptor is histidine 38. 4 cysteine pairs are disulfide-bonded: cysteine 47-cysteine 106, cysteine 61-cysteine 119, cysteine 79-cysteine 134, and cysteine 86-cysteine 94. Residue 62–66 participates in substrate binding; sequence KGLNT. N-linked (GlcNAc...) asparagine glycosylation is found at asparagine 89, asparagine 96, and asparagine 107. The active-site Proton donor is the histidine 151.

Belongs to the pancreatic ribonuclease family.

It localises to the cytoplasmic granule. In terms of biological role, cytotoxin and helminthotoxin with ribonuclease activity. Selectively chemotactic for dendritic cells. Possesses a wide variety of biological activities. In Mus musculus (Mouse), this protein is Eosinophil cationic protein 2 (Ear2).